We begin with the raw amino-acid sequence, 598 residues long: Polypeptide N-acetylgalactosaminyltransferase 17 (598 aa).

The Cytoplasmic portion of the chain corresponds to 1–6 (MASLRR). The helical; Signal-anchor for type II membrane protein transmembrane segment at 7 to 27 (VKVLLVLNLIAVAGFVIFLAK) threads the bilayer. Over 28 to 598 (CRPIAVRSGD…QRWAIKNPIK (571 aa)) the chain is Lumenal. N-linked (GlcNAc...) asparagine glycosylation occurs at N50. 2 disulfides stabilise this stretch: C142/C373 and C364/C443. Residues 151 to 262 (LPQISIIFIF…AGWAEPVLSR (112 aa)) form a catalytic subdomain A region. Residues D192 and R223 each contribute to the substrate site. 3 residues coordinate Mn(2+): D246, H248, and H378. Residues 319 to 381 (PIRTPAMIGC…PCSRVAHIER (63 aa)) are catalytic subdomain B. 2 residues coordinate substrate: R381 and Y386. Residues N461 and N486 are each glycosylated (N-linked (GlcNAc...) asparagine). Residues 465-594 (AYGELRNNKA…SCTGQRWAIK (130 aa)) form the Ricin B-type lectin domain. 3 disulfides stabilise this stretch: C478–C494, C526–C541, and C568–C586.

The protein belongs to the glycosyltransferase 2 family. GalNAc-T subfamily. Requires Mn(2+) as cofactor.

It localises to the golgi apparatus membrane. It carries out the reaction L-seryl-[protein] + UDP-N-acetyl-alpha-D-galactosamine = a 3-O-[N-acetyl-alpha-D-galactosaminyl]-L-seryl-[protein] + UDP + H(+). The catalysed reaction is L-threonyl-[protein] + UDP-N-acetyl-alpha-D-galactosamine = a 3-O-[N-acetyl-alpha-D-galactosaminyl]-L-threonyl-[protein] + UDP + H(+). Its pathway is protein modification; protein glycosylation. May catalyze the initial reaction in O-linked oligosaccharide biosynthesis, the transfer of an N-acetyl-D-galactosamine residue to a serine or threonine residue on the protein receptor. The polypeptide is Polypeptide N-acetylgalactosaminyltransferase 17 (Mus musculus (Mouse)).